The primary structure comprises 115 residues: Cytochrome c oxidase assembly protein COX16 homolog, mitochondrial (115 aa).

Residues 1 to 6 (MSRLKF) lie on the Mitochondrial matrix side of the membrane. The helical transmembrane segment at 7 to 29 (VRVGLPFFAIVLGSAYGLHFFQQ) threads the bilayer. Over 30–115 (VRFDFRKIKQ…RKVRELKSNV (86 aa)) the chain is Mitochondrial intermembrane.

The protein belongs to the COX16 family.

The protein resides in the mitochondrion inner membrane. Functionally, required for the assembly of the mitochondrial respiratory chain complex IV (CIV), also known as cytochrome c oxidase. The protein is Cytochrome c oxidase assembly protein COX16 homolog, mitochondrial of Caenorhabditis elegans.